A 552-amino-acid polypeptide reads, in one-letter code: NADH-ubiquinone oxidoreductase chain 5 (552 aa).

The next 15 helical transmembrane spans lie at 11–31, 36–56, 68–88, 89–109, 121–141, 152–172, 196–216, 229–249, 256–274, 287–307, 322–342, 365–386, 406–426, 453–473, and 532–552; these read PVTI…PFGL, LAMT…AYAI, FYII…SDNY, LMMF…ISFW, SAIL…GLMI, IALV…LLLL, TPVS…YVLV, LLII…IAIV, VIAL…AIGI, HAFF…SFVA, LPFS…IPGL, ILYY…RVLY, SLGM…IGYS, AYIK…LVYV, and SRAV…LFFI.

This sequence belongs to the complex I subunit 5 family.

It localises to the mitochondrion inner membrane. It catalyses the reaction a ubiquinone + NADH + 5 H(+)(in) = a ubiquinol + NAD(+) + 4 H(+)(out). Its function is as follows. Core subunit of the mitochondrial membrane respiratory chain NADH dehydrogenase (Complex I) that is believed to belong to the minimal assembly required for catalysis. Complex I functions in the transfer of electrons from NADH to the respiratory chain. The immediate electron acceptor for the enzyme is believed to be ubiquinone. This chain is NADH-ubiquinone oxidoreductase chain 5 (NAD5), found in Candida albicans (strain SC5314 / ATCC MYA-2876) (Yeast).